The following is a 94-amino-acid chain: Large ribosomal subunit protein uL23 (94 aa).

The protein belongs to the universal ribosomal protein uL23 family. In terms of assembly, part of the 50S ribosomal subunit. Contacts protein L29, and trigger factor when it is bound to the ribosome.

One of the early assembly proteins it binds 23S rRNA. One of the proteins that surrounds the polypeptide exit tunnel on the outside of the ribosome. Forms the main docking site for trigger factor binding to the ribosome. The sequence is that of Large ribosomal subunit protein uL23 from Mycoplasma mycoides subsp. mycoides SC (strain CCUG 32753 / NCTC 10114 / PG1).